A 306-amino-acid chain; its full sequence is tRNA (guanine-N(7)-)-methyltransferase (306 aa).

A compositionally biased stretch (polar residues) spans 1–19 (MSSTAPLDSKATEQITTAA). Positions 1–65 (MSSTAPLDSK…EASPELPSDE (65 aa)) are disordered. S-adenosyl-L-methionine-binding positions include Gly-121, 144–145 (EI), 180–181 (NA), and Cys-200. Residue Asp-203 is part of the active site. 278 to 280 (TEE) is a binding site for S-adenosyl-L-methionine.

The protein belongs to the class I-like SAM-binding methyltransferase superfamily. TrmB family. Forms a complex with TRM82.

It is found in the nucleus. The catalysed reaction is guanosine(46) in tRNA + S-adenosyl-L-methionine = N(7)-methylguanosine(46) in tRNA + S-adenosyl-L-homocysteine. Its pathway is tRNA modification; N(7)-methylguanine-tRNA biosynthesis. Its function is as follows. Catalyzes the formation of N(7)-methylguanine at position 46 (m7G46) in tRNA. The polypeptide is tRNA (guanine-N(7)-)-methyltransferase (Lodderomyces elongisporus (strain ATCC 11503 / CBS 2605 / JCM 1781 / NBRC 1676 / NRRL YB-4239) (Yeast)).